The following is a 555-amino-acid chain: MTKFVFVTGGVVSSLGKGIASASLAAILESRGLKVTLIKLDPYLNVDPGTMSPFQHGEVFVTNDGAETDLDLGHYERFVETRMRKANNFTTGQIYKSVLEKERRGDYLGKTVQVIPHVTNEIQDFVKRGAGWGTPDAVDVAIVEIGGTVGDIESLPFLEAVRQMSLKLGPNNSAFVHLSYVPWIAAAGELKTKPTQHTAKQLREIGIQADALLCRADRPIPKEEREKISLFSNVPDWAVISMWDVDTIYKVPRMLHEQGLDGLICDKLRLSTPPANLKRWDDLVYETAHPQGDVNIVMVGKYVELSDSYKSLNEAIRHAGMKNHVRVKIDYIDSETITPDNVTQLAKFDAILVPGGFGIRGVEGKICAARFARENKVPYLGICLGMQVATIEFARHVAGLKDANSTEFDPSSPNPVIALITEWKDADGSIKTRDENSDLGGTMRLGAQSSDVVKGTLAHKIYGDVVTERHRHRYEANVHFLDTLRKAGLVISAFTQREHLTEIVELPQSVHPWFMGVQFHPEFNSTPWAGHPLFIAFIKAALDHQAAGKALKAVA.

The tract at residues 1 to 270 (MTKFVFVTGG…DGLICDKLRL (270 aa)) is amidoligase domain. Residue Ser13 participates in CTP binding. Ser13 serves as a coordination point for UTP. Residues 14 to 19 (SLGKGI) and Asp71 contribute to the ATP site. Residues Asp71 and Glu144 each coordinate Mg(2+). Residues 151 to 153 (DIE), 191 to 196 (KTKPTQ), and Lys227 each bind CTP. UTP is bound by residues 191–196 (KTKPTQ) and Lys227. Positions 295-547 (NIVMVGKYVE…IKAALDHQAA (253 aa)) constitute a Glutamine amidotransferase type-1 domain. Gly356 contributes to the L-glutamine binding site. The active-site Nucleophile; for glutamine hydrolysis is Cys383. L-glutamine contacts are provided by residues 384–387 (LGMQ), Glu407, and Arg473. Active-site residues include His520 and Glu522.

Belongs to the CTP synthase family. As to quaternary structure, homotetramer.

The enzyme catalyses UTP + L-glutamine + ATP + H2O = CTP + L-glutamate + ADP + phosphate + 2 H(+). It catalyses the reaction L-glutamine + H2O = L-glutamate + NH4(+). It carries out the reaction UTP + NH4(+) + ATP = CTP + ADP + phosphate + 2 H(+). It participates in pyrimidine metabolism; CTP biosynthesis via de novo pathway; CTP from UDP: step 2/2. Allosterically activated by GTP, when glutamine is the substrate; GTP has no effect on the reaction when ammonia is the substrate. The allosteric effector GTP functions by stabilizing the protein conformation that binds the tetrahedral intermediate(s) formed during glutamine hydrolysis. Inhibited by the product CTP, via allosteric rather than competitive inhibition. In terms of biological role, catalyzes the ATP-dependent amination of UTP to CTP with either L-glutamine or ammonia as the source of nitrogen. Regulates intracellular CTP levels through interactions with the four ribonucleotide triphosphates. In Albidiferax ferrireducens (strain ATCC BAA-621 / DSM 15236 / T118) (Rhodoferax ferrireducens), this protein is CTP synthase.